We begin with the raw amino-acid sequence, 334 residues long: Cobalt-precorrin-5B C(1)-methyltransferase (334 aa).

The protein belongs to the CbiD family.

The catalysed reaction is Co-precorrin-5B + S-adenosyl-L-methionine = Co-precorrin-6A + S-adenosyl-L-homocysteine. The protein operates within cofactor biosynthesis; adenosylcobalamin biosynthesis; cob(II)yrinate a,c-diamide from sirohydrochlorin (anaerobic route): step 6/10. Catalyzes the methylation of C-1 in cobalt-precorrin-5B to form cobalt-precorrin-6A. The protein is Cobalt-precorrin-5B C(1)-methyltransferase of Methanoregula boonei (strain DSM 21154 / JCM 14090 / 6A8).